Consider the following 346-residue polypeptide: Cyclin-dependent kinase 20 (346 aa).

In terms of domain architecture, Protein kinase spans Tyr4 to Phe288. ATP contacts are provided by residues Ile10 to Val18 and Lys33. The Proton acceptor role is filled by Asp127. The interval Ser298–His324 is disordered. The span at Pro303 to Pro318 shows a compositional bias: pro residues.

This sequence belongs to the protein kinase superfamily. CMGC Ser/Thr protein kinase family. CDC2/CDKX subfamily. As to quaternary structure, monomer. Interacts with MAK. Interacts with TBC1D32.

The protein resides in the nucleus. Its subcellular location is the cytoplasm. The protein localises to the cell projection. It is found in the cilium. The catalysed reaction is L-seryl-[protein] + ATP = O-phospho-L-seryl-[protein] + ADP + H(+). It catalyses the reaction L-threonyl-[protein] + ATP = O-phospho-L-threonyl-[protein] + ADP + H(+). Its function is as follows. Involved in cell growth. Activates CDK2, a kinase involved in the control of the cell cycle, by phosphorylating residue 'Thr-160'. Required for high-level Shh responses in the developing neural tube. Together with TBC1D32, controls the structure of the primary cilium by coordinating assembly of the ciliary membrane and axoneme, allowing GLI2 to be properly activated in response to SHH signaling. The polypeptide is Cyclin-dependent kinase 20 (Cdk20) (Mus musculus (Mouse)).